Here is a 306-residue protein sequence, read N- to C-terminus: Aspartate carbamoyltransferase catalytic subunit (306 aa).

The carbamoyl phosphate site is built by R49 and T50. Residue K77 participates in L-aspartate binding. Carbamoyl phosphate is bound by residues R99, H127, and Q130. Residues R160 and R211 each coordinate L-aspartate. 2 residues coordinate carbamoyl phosphate: A250 and P251.

Belongs to the aspartate/ornithine carbamoyltransferase superfamily. ATCase family. In terms of assembly, heterododecamer (2C3:3R2) of six catalytic PyrB chains organized as two trimers (C3), and six regulatory PyrI chains organized as three dimers (R2).

It carries out the reaction carbamoyl phosphate + L-aspartate = N-carbamoyl-L-aspartate + phosphate + H(+). Its pathway is pyrimidine metabolism; UMP biosynthesis via de novo pathway; (S)-dihydroorotate from bicarbonate: step 2/3. Its function is as follows. Catalyzes the condensation of carbamoyl phosphate and aspartate to form carbamoyl aspartate and inorganic phosphate, the committed step in the de novo pyrimidine nucleotide biosynthesis pathway. The polypeptide is Aspartate carbamoyltransferase catalytic subunit (Bacillus licheniformis (strain ATCC 14580 / DSM 13 / JCM 2505 / CCUG 7422 / NBRC 12200 / NCIMB 9375 / NCTC 10341 / NRRL NRS-1264 / Gibson 46)).